The chain runs to 227 residues: Guanylate kinase (227 aa).

The Guanylate kinase-like domain maps to glycine 21–alanine 199. Alanine 28–serine 35 provides a ligand contact to ATP.

It belongs to the guanylate kinase family.

It is found in the cytoplasm. The catalysed reaction is GMP + ATP = GDP + ADP. Functionally, essential for recycling GMP and indirectly, cGMP. The polypeptide is Guanylate kinase (Burkholderia thailandensis (strain ATCC 700388 / DSM 13276 / CCUG 48851 / CIP 106301 / E264)).